The primary structure comprises 274 residues: Rhamnulose-1-phosphate aldolase (274 aa).

The active site involves glutamate 117. Residues histidine 141, histidine 143, and histidine 212 each coordinate Zn(2+).

The protein belongs to the aldolase class II family. RhaD subfamily. Homotetramer. Requires Zn(2+) as cofactor.

The protein localises to the cytoplasm. The catalysed reaction is L-rhamnulose 1-phosphate = (S)-lactaldehyde + dihydroxyacetone phosphate. The protein operates within carbohydrate degradation; L-rhamnose degradation; glycerone phosphate from L-rhamnose: step 3/3. Catalyzes the reversible cleavage of L-rhamnulose-1-phosphate to dihydroxyacetone phosphate (DHAP) and L-lactaldehyde. The protein is Rhamnulose-1-phosphate aldolase of Escherichia coli (strain SMS-3-5 / SECEC).